Reading from the N-terminus, the 155-residue chain is Ribonuclease H (155 aa).

An RNase H type-1 domain is found at 1-142 (MLKQVEIFTD…CDELARAAAM (142 aa)). Residues Asp10, Glu48, Asp70, and Asp134 each contribute to the Mg(2+) site.

The protein belongs to the RNase H family. As to quaternary structure, monomer. Mg(2+) serves as cofactor.

The protein resides in the cytoplasm. The catalysed reaction is Endonucleolytic cleavage to 5'-phosphomonoester.. In terms of biological role, endonuclease that specifically degrades the RNA of RNA-DNA hybrids. The protein is Ribonuclease H of Citrobacter koseri (strain ATCC BAA-895 / CDC 4225-83 / SGSC4696).